The chain runs to 424 residues: Glutamate-1-semialdehyde 2,1-aminomutase (424 aa).

Lys264 carries the post-translational modification N6-(pyridoxal phosphate)lysine.

This sequence belongs to the class-III pyridoxal-phosphate-dependent aminotransferase family. HemL subfamily. Homodimer. Pyridoxal 5'-phosphate serves as cofactor.

The protein localises to the cytoplasm. The catalysed reaction is (S)-4-amino-5-oxopentanoate = 5-aminolevulinate. It participates in porphyrin-containing compound metabolism; protoporphyrin-IX biosynthesis; 5-aminolevulinate from L-glutamyl-tRNA(Glu): step 2/2. The chain is Glutamate-1-semialdehyde 2,1-aminomutase (hemL) from Aquifex aeolicus (strain VF5).